Here is a 721-residue protein sequence, read N- to C-terminus: Choline O-acetyltransferase (721 aa).

His-419 serves as the catalytic Proton acceptor. Residues 496-508 (GKTFIKSCQVSPD), Ser-534, and Gln-656 contribute to the CoA site.

This sequence belongs to the carnitine/choline acetyltransferase family. In terms of assembly, the 54 kDa and 13 kDa chains exist as a heterodimer. In terms of processing, the N-terminus of choline O-acetyltransferase 67 kDa and 54 kDa chains are blocked.

It carries out the reaction choline + acetyl-CoA = acetylcholine + CoA. Catalyzes the reversible synthesis of acetylcholine (ACh) from acetyl CoA and choline at cholinergic synapses. In Drosophila melanogaster (Fruit fly), this protein is Choline O-acetyltransferase.